A 63-amino-acid polypeptide reads, in one-letter code: MRLHHLLLAVLFLVLSAGSGFTQRVRNPQSCRWNMGVCIPFLCRVGMRQIGTCFGPRVPCCRR.

An N-terminal signal peptide occupies residues 1 to 22; sequence MRLHHLLLAVLFLVLSAGSGFT. A Pyrrolidone carboxylic acid modification is found at glutamine 23. 3 disulfide bridges follow: cysteine 31–cysteine 60, cysteine 38–cysteine 53, and cysteine 43–cysteine 61.

Belongs to the beta-defensin family. Neutrophilic granules.

It localises to the secreted. Functionally, has bactericidal activity. Active against E.coli ML35 and S.aureus 502A. The sequence is that of Beta-defensin 4 (DEFB4) from Bos taurus (Bovine).